Reading from the N-terminus, the 204-residue chain is MSRSSEDKQIEIYEFIKEQIIEKGYPPSVREICKGVGLSSTSSVHGHLSKLEKKGLIRRDSTKPRTIEILKEPIVPKEMVNIPILGKVTAGTPILAVENIEDTFPISLNFIPSNKDLFMLKISGESMIDAGILDGDLAIIEKTNTAKNGEIVVALIDNEVTLKRFFKEDKHIRLQPENKNMDPIILEDDSVSIVGKLAGIFRRY.

Positions 29 to 49 (VREICKGVGLSSTSSVHGHLS) form a DNA-binding region, H-T-H motif. Active-site for autocatalytic cleavage activity residues include S126 and K163.

Belongs to the peptidase S24 family. Homodimer.

The enzyme catalyses Hydrolysis of Ala-|-Gly bond in repressor LexA.. In terms of biological role, represses a number of genes involved in the response to DNA damage (SOS response), including recA and lexA. In the presence of single-stranded DNA, RecA interacts with LexA causing an autocatalytic cleavage which disrupts the DNA-binding part of LexA, leading to derepression of the SOS regulon and eventually DNA repair. The protein is LexA repressor of Clostridium novyi (strain NT).